A 124-amino-acid polypeptide reads, in one-letter code: Small ribosomal subunit protein uS12c (124 aa).

2 disordered regions span residues 1-28 and 104-124; these read MPTI…QSCP and AAGV…KPKS. Composition is skewed to basic residues over residues 11-20 and 109-124; these read ERRKIHKKTK and DRRK…KPKS.

The protein belongs to the universal ribosomal protein uS12 family. In terms of assembly, part of the 30S ribosomal subunit.

It is found in the plastid. It localises to the chloroplast. Its function is as follows. With S4 and S5 plays an important role in translational accuracy. Located at the interface of the 30S and 50S subunits. In Pyropia yezoensis (Susabi-nori), this protein is Small ribosomal subunit protein uS12c (rps12).